Here is a 317-residue protein sequence, read N- to C-terminus: Cytochrome f (317 aa).

Positions 1–31 (MIFKPQSFLKAIVLSMTITFAFNMSAPIASA) are cleaved as a signal peptide. Tyr32, Cys52, Cys55, and His56 together coordinate heme. The helical transmembrane segment at 280-302 (PVRIQGLLAFFACILLAQILLVV) threads the bilayer.

It belongs to the cytochrome f family. As to quaternary structure, the 4 large subunits of the cytochrome b6-f complex are cytochrome b6, subunit IV (17 kDa polypeptide, petD), cytochrome f and the Rieske protein, while the 4 small subunits are PetG, PetL, PetM and PetN. The complex functions as a dimer. The cofactor is heme.

It is found in the plastid. The protein localises to the chloroplast thylakoid membrane. Component of the cytochrome b6-f complex, which mediates electron transfer between photosystem II (PSII) and photosystem I (PSI), cyclic electron flow around PSI, and state transitions. The protein is Cytochrome f of Chlamydomonas subcaudata.